A 107-amino-acid chain; its full sequence is Antimicrobial peptide damicornin (107 aa).

A signal peptide spans 1–22; sequence MKVLVILFGAMLVLMEFQKASA. Residues 23–67 constitute a propeptide that is removed on maturation; sequence ATLLEDFDDDDDLLDDGGDFDLEANSDASSGNGNDSNDAVPEKRR. Acidic residues predominate over residues 37–46; the sequence is DDGGDFDLEA. A disordered region spans residues 37–62; it reads DDGGDFDLEANSDASSGNGNDSNDAV. Positions 47–61 are enriched in low complexity; it reads NSDASSGNGNDSNDA. Intrachain disulfides connect Cys69–Cys105, Cys78–Cys99, and Cys85–Cys103. Arg106 carries the post-translational modification Arginine amide.

The protein belongs to the coral AMP family. Is specifically expressed in the granular cells of the ectoderm.

The protein localises to the cytoplasm. The protein resides in the stress granule. Its subcellular location is the secreted. In terms of biological role, cationic peptide with probable antimicrobial activity against coral pathogens. Shows in vitro activity against Gram-positive bacteria and the filamentous fungus F.oxysporum (MIC=1.25 uM). Gram-positive bacteria tested are B.megaterium (MIC=20 uM), S.aureus (MIC=5 uM), M. luteus (MIC=1.25 uM), B.stationis (MIC=10 uM), M.maritypicum (MIC=20 uM). Has no or little effect against Gram-negative bacteria (the coral pathogen V.coralliilyticus (MIC&gt;20 uM), V.aesturianus (MIC&gt;20 uM), V.shiloi (MIC&gt;20 uM), and E.coli (MIC=10 uM)). Has no hemolytic activity against sheep erythrocytes. This is Antimicrobial peptide damicornin from Pocillopora damicornis (Cauliflower coral).